Reading from the N-terminus, the 132-residue chain is Large ribosomal subunit protein bL17 (132 aa).

The protein belongs to the bacterial ribosomal protein bL17 family. In terms of assembly, part of the 50S ribosomal subunit. Contacts protein L32.

This chain is Large ribosomal subunit protein bL17, found in Leptothrix cholodnii (strain ATCC 51168 / LMG 8142 / SP-6) (Leptothrix discophora (strain SP-6)).